Here is a 118-residue protein sequence, read N- to C-terminus: Cycloviolacin-O8 (118 aa).

The signal sequence occupies residues 1-22 (MEMKNMVVGLFLIAAFALPALA). Positions 23–84 (TNFEKDFITH…THSNSINALG (62 aa)) are excised as a propeptide. Positions 85–115 (GTLPCGESCVWIPCISSVVGCSCKSKVCYKN) form a cross-link, cyclopeptide (Gly-Asn). Disulfide bonds link C89-C105, C93-C107, and C98-C112. Residues 116 to 118 (SLA) constitute a propeptide that is removed on maturation.

In terms of processing, cycloviolacin-O8 is a cyclic peptide. Expressed in leaves, petals, petioles and roots but not in runners (at protein level).

In terms of biological role, probably participates in a plant defense mechanism. In Viola odorata (Sweet violet), this protein is Cycloviolacin-O8 (Voc1).